Reading from the N-terminus, the 171-residue chain is Neuronal vesicle trafficking-associated protein 2 (171 aa).

Residues 1-21 (MVKLNSNPGEKGAKPPSVEDG) are disordered. Residues 1 to 71 (MVKLNSNPGE…FRVPKIAEFT (71 aa)) are Cytoplasmic-facing. The chain crosses the membrane as a helical; Signal-anchor for type II membrane protein span at residues 72 to 92 (VTILVSLALAFLACIVFLVVY). Over 93–171 (KAFTYDHSCP…EPKPPKTQGH (79 aa)) the chain is Lumenal.

The protein belongs to the NSG family. In terms of tissue distribution, specifically expressed in neural and neuroendocrine tissues. Pituitary and less in adrenal gland and testis. Expressed in the hippocampus throughout development. Remains enriched in layer V cortical neurons during development. At P0, broadly expressed in the neocortex. Is down-regulated overall at P8 and P14, but remains relatively enriched in layer V. At P0 is lower expressed in the cerebellum. Expression remains low throughout development, and is undetectable by adulthood.

The protein resides in the membrane. Its subcellular location is the golgi apparatus. It is found in the trans-Golgi network membrane. It localises to the cell projection. The protein localises to the dendrite. The protein resides in the endosome membrane. Its subcellular location is the early endosome membrane. It is found in the late endosome membrane. It localises to the lysosome lumen. The protein localises to the cytoplasmic vesicle membrane. The protein resides in the golgi stack membrane. Its subcellular location is the endosome. It is found in the multivesicular body membrane. This is Neuronal vesicle trafficking-associated protein 2 from Mus musculus (Mouse).